A 106-amino-acid polypeptide reads, in one-letter code: Testis-specific basic protein Y 2 (106 aa).

This sequence belongs to the VCX/VCY family. As to quaternary structure, interacts with MAP1S. Interacts with UBE3A (via HECT domain). Expressed exclusively in testis. Expressed in ejaculated spermatozoa of germ cell. Expressed in the nuclei of spermatogonia, spermatocytes, and round spermatids, except elongated spermatids (at protein level).

This chain is Testis-specific basic protein Y 2 (BPY2), found in Homo sapiens (Human).